A 372-amino-acid chain; its full sequence is Putative glutamate--cysteine ligase 2 (372 aa).

It belongs to the glutamate--cysteine ligase type 2 family. YbdK subfamily.

The catalysed reaction is L-cysteine + L-glutamate + ATP = gamma-L-glutamyl-L-cysteine + ADP + phosphate + H(+). ATP-dependent carboxylate-amine ligase which exhibits weak glutamate--cysteine ligase activity. The chain is Putative glutamate--cysteine ligase 2 from Gloeobacter violaceus (strain ATCC 29082 / PCC 7421).